The primary structure comprises 242 residues: tRNA1(Val) (adenine(37)-N6)-methyltransferase (242 aa).

It belongs to the methyltransferase superfamily. tRNA (adenine-N(6)-)-methyltransferase family.

The protein localises to the cytoplasm. The enzyme catalyses adenosine(37) in tRNA1(Val) + S-adenosyl-L-methionine = N(6)-methyladenosine(37) in tRNA1(Val) + S-adenosyl-L-homocysteine + H(+). In terms of biological role, specifically methylates the adenine in position 37 of tRNA(1)(Val) (anticodon cmo5UAC). This Mannheimia succiniciproducens (strain KCTC 0769BP / MBEL55E) protein is tRNA1(Val) (adenine(37)-N6)-methyltransferase.